The following is a 366-amino-acid chain: Histidinol-phosphate aminotransferase 2 (366 aa).

Lys-226 is modified (N6-(pyridoxal phosphate)lysine).

It belongs to the class-II pyridoxal-phosphate-dependent aminotransferase family. Histidinol-phosphate aminotransferase subfamily. As to quaternary structure, homodimer. Pyridoxal 5'-phosphate serves as cofactor.

The catalysed reaction is L-histidinol phosphate + 2-oxoglutarate = 3-(imidazol-4-yl)-2-oxopropyl phosphate + L-glutamate. Its pathway is amino-acid biosynthesis; L-histidine biosynthesis; L-histidine from 5-phospho-alpha-D-ribose 1-diphosphate: step 7/9. This chain is Histidinol-phosphate aminotransferase 2, found in Haemophilus influenzae (strain 86-028NP).